The primary structure comprises 336 residues: Holliday junction branch migration complex subunit RuvB (336 aa).

Residues 1-11 show a composition bias toward basic and acidic residues; sequence MDDDKLLSGDK. The disordered stretch occupies residues 1-21; sequence MDDDKLLSGDKADDEEASLEK. A large ATPase domain (RuvB-L) region spans residues 1 to 184; it reads MDDDKLLSGD…FGIVEHMAYY (184 aa). ATP-binding positions include leucine 23, arginine 24, glycine 65, lysine 68, threonine 69, threonine 70, 131 to 133, arginine 174, tyrosine 184, and arginine 221; that span reads EDF. Threonine 69 is a Mg(2+) binding site. The tract at residues 185 to 255 is small ATPAse domain (RuvB-S); sequence EVADLEDIVK…IVARSLTYLR (71 aa). Positions 258 to 336 are head domain (RuvB-H); sequence DAGLDETDNK…HLGFPYPENK (79 aa). DNA is bound by residues arginine 313 and arginine 318.

This sequence belongs to the RuvB family. In terms of assembly, homohexamer. Forms an RuvA(8)-RuvB(12)-Holliday junction (HJ) complex. HJ DNA is sandwiched between 2 RuvA tetramers; dsDNA enters through RuvA and exits via RuvB. An RuvB hexamer assembles on each DNA strand where it exits the tetramer. Each RuvB hexamer is contacted by two RuvA subunits (via domain III) on 2 adjacent RuvB subunits; this complex drives branch migration. In the full resolvosome a probable DNA-RuvA(4)-RuvB(12)-RuvC(2) complex forms which resolves the HJ.

The protein localises to the cytoplasm. The catalysed reaction is ATP + H2O = ADP + phosphate + H(+). Its function is as follows. The RuvA-RuvB-RuvC complex processes Holliday junction (HJ) DNA during genetic recombination and DNA repair, while the RuvA-RuvB complex plays an important role in the rescue of blocked DNA replication forks via replication fork reversal (RFR). RuvA specifically binds to HJ cruciform DNA, conferring on it an open structure. The RuvB hexamer acts as an ATP-dependent pump, pulling dsDNA into and through the RuvAB complex. RuvB forms 2 homohexamers on either side of HJ DNA bound by 1 or 2 RuvA tetramers; 4 subunits per hexamer contact DNA at a time. Coordinated motions by a converter formed by DNA-disengaged RuvB subunits stimulates ATP hydrolysis and nucleotide exchange. Immobilization of the converter enables RuvB to convert the ATP-contained energy into a lever motion, pulling 2 nucleotides of DNA out of the RuvA tetramer per ATP hydrolyzed, thus driving DNA branch migration. The RuvB motors rotate together with the DNA substrate, which together with the progressing nucleotide cycle form the mechanistic basis for DNA recombination by continuous HJ branch migration. Branch migration allows RuvC to scan DNA until it finds its consensus sequence, where it cleaves and resolves cruciform DNA. This chain is Holliday junction branch migration complex subunit RuvB, found in Lactiplantibacillus plantarum (strain ATCC BAA-793 / NCIMB 8826 / WCFS1) (Lactobacillus plantarum).